A 403-amino-acid polypeptide reads, in one-letter code: S-arrestin (403 aa).

An interaction with RHO region spans residues 11 to 19; sequence HVIFKKVSR. Phosphothreonine is present on Thr231. Residues 381 to 403 are disordered; it reads RQNLKDTGENTEGKKDEDAGQDE.

This sequence belongs to the arrestin family. In terms of assembly, monomer. Homodimer. Homotetramer. Interacts with RHO (via the phosphorylated C-terminus). As to expression, detected in retina (at protein level).

Its subcellular location is the cell projection. The protein localises to the cilium. The protein resides in the photoreceptor outer segment. It localises to the membrane. In terms of biological role, binds to photoactivated, phosphorylated RHO and terminates RHO signaling via G-proteins by competing with G-proteins for the same binding site on RHO. May play a role in preventing light-dependent degeneration of retinal photoreceptor cells. This Mus musculus (Mouse) protein is S-arrestin (Sag).